We begin with the raw amino-acid sequence, 630 residues long: Ubiquitin carboxyl-terminal hydrolase MINDY-2 (630 aa).

The disordered stretch occupies residues 1 to 209 (MESGPESLQP…RVPEEEEGAA (209 aa)). Residues 24–33 (GSPQEGQQET) are compositionally biased toward polar residues. Residue S94 is modified to Phosphoserine. Low complexity-rich tracts occupy residues 141–163 (EESA…SCSD) and 170–191 (SPSL…SSEF). The active-site Nucleophile is the C267. The active-site Proton acceptor is the H449. The tract at residues 508 to 560 (GQQDQIDQDYLMALSLQQEQQSQEINWEQIPEGISDLELAKKLQEEEDRRASQ) is ubiquitin-binding domain (UBD). Residues 564 to 599 (EQEQAAAAAASASASASASASTQAPQSQPVQASPSS) show a composition bias toward low complexity. A disordered region spans residues 564-630 (EQEQAAAAAA…EKEKNSCVIL (67 aa)). A compositionally biased stretch (basic and acidic residues) spans 606 to 630 (SERKRKEPREKDKEKEKEKNSCVIL).

Belongs to the MINDY deubiquitinase family. FAM63 subfamily.

The enzyme catalyses Thiol-dependent hydrolysis of ester, thioester, amide, peptide and isopeptide bonds formed by the C-terminal Gly of ubiquitin (a 76-residue protein attached to proteins as an intracellular targeting signal).. Hydrolase that can remove 'Lys-48'-linked conjugated ubiquitin from proteins. Can also bind to polyubiquitin chains of different linkage types, including 'Lys-6', 'Lys-11', 'Lys-29', 'Lys-33' and 'Lys-63'. May play a regulatory role at the level of protein turnover. The chain is Ubiquitin carboxyl-terminal hydrolase MINDY-2 (MINDY2) from Bos taurus (Bovine).